The following is a 434-amino-acid chain: MKHLTPREIVAELDRHIVGQNAAKRAVAIALRNRWRRKQAPENLRGEITPKNILMIGPTGVGKTEVSRRLARLANAPFLKVEATKFTEVGYVGRDVEQIVRDLVEAAVGMIREQKRAGVDKAARDKAEERLLDALVGAEAQSSTREVFRRKLRAGELDDKEVDLDFADTNNPMQMLDLPGQGGSMSMINLGDMLGKAMGGRTRRVRTTVREAAKPLVTEEADKLVDEEQIVREAIMAVEEDGIVFLDEIDKIAARKDRGGADVSREGVQRDLLPLIEGTTVSTKRGAVKTDHILFIASGAFHVAKPSDLLPELQGRLPIRVELEPLTRDDLRRILVEPQASLIRQYEALMAAENVTLTFEDGAIDRIADMAEAVNKSIENIGARRLQTILERLLDDISFDAPDKGGETFTITASYVDEKVGSLAGNADLSKFIL.

Residues Val-18, 60-65 (GVGKTE), Asp-247, Glu-312, and Arg-384 each bind ATP.

Belongs to the ClpX chaperone family. HslU subfamily. In terms of assembly, a double ring-shaped homohexamer of HslV is capped on each side by a ring-shaped HslU homohexamer. The assembly of the HslU/HslV complex is dependent on binding of ATP.

It localises to the cytoplasm. In terms of biological role, ATPase subunit of a proteasome-like degradation complex; this subunit has chaperone activity. The binding of ATP and its subsequent hydrolysis by HslU are essential for unfolding of protein substrates subsequently hydrolyzed by HslV. HslU recognizes the N-terminal part of its protein substrates and unfolds these before they are guided to HslV for hydrolysis. The chain is ATP-dependent protease ATPase subunit HslU from Hyphomonas neptunium (strain ATCC 15444).